A 367-amino-acid chain; its full sequence is MAFKLWLLDEETIYEHVFERYTQLEGQSGKLAQDLGIQDRRGGVLEITFEPSGLEGGRKKKRVRRRNKASSVEEDQNVAVDSYHVSVGQSISSLHSSRDNGNSTTGYVLWSTTPFFINWLLYSTSAAPFRLGSQVEVTCGSSCEGHXLELPRLXDLTGADRGKRGILELGAGISGILPVILGNFVDTYVSTDQKGILNKLKDNIMENLSQLTRKRCISRSLRLELPTVEPVGDADITAASLPSKSTLHLEVAALDWEKINLQDKKTHSLHPELSLIGETCSSVYVIAMDVIYNEYLIDPFLKTLKQLKHWLQTTYNLQFHVLVGIHLRSQEVTTLFLEKAIIEYDFTVYDIVDQVIQESRFNFYLIT.

The segment at 55-74 (EGGRKKKRVRRRNKASSVEE) is disordered. The span at 58–68 (RKKKRVRRRNK) shows a compositional bias: basic residues. S-adenosyl-L-methionine contacts are provided by residues Trp110, 170-172 (GAG), Asp192, Trp256, and Met288.

The protein belongs to the class I-like SAM-binding methyltransferase superfamily. RKM5 family.

In terms of biological role, S-adenosyl-L-methionine-dependent protein-lysine N-methyltransferase that monomethylates 60S ribosomal protein L1 (RPL1A and RPL1B) at 'Lys-46'. The polypeptide is Ribosomal lysine N-methyltransferase 5 (RKM5) (Saccharomyces cerevisiae (strain VIN 13) (Baker's yeast)).